Here is a 261-residue protein sequence, read N- to C-terminus: Acetylglutamate kinase (261 aa).

Substrate is bound by residues 48–49 (GG), Arg70, and Asn164.

Belongs to the acetylglutamate kinase family. ArgB subfamily.

The protein resides in the cytoplasm. It catalyses the reaction N-acetyl-L-glutamate + ATP = N-acetyl-L-glutamyl 5-phosphate + ADP. Its pathway is amino-acid biosynthesis; L-arginine biosynthesis; N(2)-acetyl-L-ornithine from L-glutamate: step 2/4. In terms of biological role, catalyzes the ATP-dependent phosphorylation of N-acetyl-L-glutamate. The sequence is that of Acetylglutamate kinase from Roseiflexus sp. (strain RS-1).